Consider the following 166-residue polypeptide: Large ribosomal subunit protein uL10 (166 aa).

The protein belongs to the universal ribosomal protein uL10 family. Part of the ribosomal stalk of the 50S ribosomal subunit. The N-terminus interacts with L11 and the large rRNA to form the base of the stalk. The C-terminus forms an elongated spine to which L12 dimers bind in a sequential fashion forming a multimeric L10(L12)X complex.

In terms of biological role, forms part of the ribosomal stalk, playing a central role in the interaction of the ribosome with GTP-bound translation factors. The sequence is that of Large ribosomal subunit protein uL10 from Shewanella denitrificans (strain OS217 / ATCC BAA-1090 / DSM 15013).